The primary structure comprises 887 residues: MGEAEKFHYIYSCDLDINVQLKIGSLEGKREQKSYKAVLEDPMLKFSGLYQETCSDLYVTCQVFAEGKPLALPVRTSYKAFSTRWNWNEWLKLPVKYPDLPRNAQVALTIWDVYGPGKAVPVGGTTVSLFGKYGMFRQGMHDLKVWPNVEADGSEPTKTPGRTSSTLSEDQMSRLAKLTKAHRQGHMVKVDWLDRLTFREIEMINESEKRSSNFMYLMVEFRCVKCDDKEYGIVYYEKDGDESSPILTSFELVKVPDPQMSMENLVESKHHKLARSLRSGPSDHDLKPNAATRDQLNIIVSYPPTKQLTYEEQDLVWKFRYYLTNQEKALTKFLKCVNWDLPQEAKQALELLGKWKPMDVEDSLELLSSHYTNPTVRRYAVARLRQADDEDLLMYLLQLVQALKYENFDDIKNGLEPTKKDSQSSVSENVSNSGINSAEIDSSQIITSPLPSVSSPPPASKTKEVPDGENLEQDLCTFLISRACKNSTLANYLYWYVIVECEDQDTQQRDPKTHEMYLNVMRRFSQALLKGDKSVRVMRSLLAAQQTFVDRLVHLMKAVQRESGNRKKKNERLQALLGDNEKMNLSDVELIPLPLEPQVKIRGIIPETATLFKSALMPAQLFFKTEDGGKYPVIFKHGDDLRQDQLILQIISLMDKLLRKENLDLKLTPYKVLATSTKHGFMQFIQSVPVAEVLDTEGSIQNFFRKYAPSENGPNGISAEVMDTYVKSCAGYCVITYILGVGDRHLDNLLLTKTGKLFHIDFGYILGRDPKPLPPPMKLNKEMVEGMGGTQSEQYQEFRKQCYTAFLHLRRYSNLILNLFSLMVDANIPDIALEPDKTVKKVQDKFRLDLSDEEAVHYMQSLIDESVHALFAAVVEQIHKFAQYWRK.

The 150-residue stretch at 35–184 folds into the C2 PI3K-type domain; it reads YKAVLEDPML…LAKLTKAHRQ (150 aa). The tract at residues 149–170 is disordered; the sequence is VEADGSEPTKTPGRTSSTLSED. Over residues 156–170 the composition is skewed to polar residues; the sequence is PTKTPGRTSSTLSED. A Phosphothreonine; by AMPK modification is found at Thr-163. Ser-165 is subject to Phosphoserine; by AMPK. Phosphoserine is present on residues Ser-244, Ser-261, and Ser-282. The PIK helical domain occupies 283–520; it reads DHDLKPNAAT…PKTHEMYLNV (238 aa). The tract at residues 447–467 is disordered; it reads TSPLPSVSSPPPASKTKEVPD. Residues 605–871 enclose the PI3K/PI4K catalytic domain; the sequence is IPETATLFKS…LIDESVHALF (267 aa). The interval 611 to 617 is G-loop; it reads LFKSALM. The segment at 740–748 is catalytic loop; that stretch reads GVGDRHLDN. Residues 759 to 780 form an activation loop region; that stretch reads HIDFGYILGRDPKPLPPPMKLN.

This sequence belongs to the PI3/PI4-kinase family. In terms of assembly, component of the PI3K (PI3KC3/PI3K-III/class III phosphatidylinositol 3-kinase) complex the core of which is composed of the catalytic subunit PIK3C3, the regulatory subunit PIK3R4 and BECN1 associating with additional regulatory/auxiliary subunits to form alternative complex forms. Alternative complex forms containing a fourth regulatory subunit in a mutually exclusive manner are: the PI3K complex I (PI3KC3-C1) containing ATG14, and the PI3K complex II (PI3KC3-C2) containing UVRAG. PI3KC3-C1 displays a V-shaped architecture with PIK3R4 serving as a bridge between PIK3C3 and the ATG14:BECN1 subcomplex. Both, PI3KC3-C1 and PI3KC3-C2, can associate with further regulatory subunits such as RUBCN, SH3GLB1/Bif-1 and AMBRA1. PI3KC3-C1 probably associates with PIK3CB. Interacts with RAB7A in the presence of PIK3R4. Interacts with AMBRA1. Interacts with BECN1P1/BECN2. Interacts with SLAMF1. May be a component of a complex composed of RAB5A (in GDP-bound form), DYN2 and PIK3C3. Interacts with NCKAP1L. Interacts with ATG14; this interaction is increased in the absence of TMEM39A. Interacts with STEEP1; the interaction is STING1-dependent and required for trafficking of STING1 from the endoplasmic reticulum. Interacts with YWHAG. Interacts with ARMC3. Requires Mn(2+) as cofactor. In terms of processing, ubiquitinated via 'Lys-29'- and 'Lys-48'-linked ubiquitination by UBE3C, promoting its degradation. Deubiquitination by ZRANB1/TRABID promotes its stabilization, leading to autophagosome maturation. In terms of tissue distribution, ubiquitously expressed, with a highest expression in skeletal muscle.

The protein resides in the midbody. Its subcellular location is the late endosome. It localises to the cytoplasmic vesicle. It is found in the autophagosome. The catalysed reaction is a 1,2-diacyl-sn-glycero-3-phospho-(1D-myo-inositol) + ATP = a 1,2-diacyl-sn-glycero-3-phospho-(1D-myo-inositol-3-phosphate) + ADP + H(+). Catalytic subunit of the PI3K complex that mediates formation of phosphatidylinositol 3-phosphate; different complex forms are believed to play a role in multiple membrane trafficking pathways: PI3KC3-C1 is involved in initiation of autophagosomes and PI3KC3-C2 in maturation of autophagosomes and endocytosis. As part of PI3KC3-C1, promotes endoplasmic reticulum membrane curvature formation prior to vesicle budding. Involved in regulation of degradative endocytic trafficking and required for the abscission step in cytokinesis, probably in the context of PI3KC3-C2. Involved in the transport of lysosomal enzyme precursors to lysosomes. Required for transport from early to late endosomes. Functionally, (Microbial infection) Kinase activity is required for SARS coronavirus-2/SARS-CoV-2 replication. This Homo sapiens (Human) protein is Phosphatidylinositol 3-kinase catalytic subunit type 3.